We begin with the raw amino-acid sequence, 373 residues long: GTPase Obg (373 aa).

Residues M1 to I158 enclose the Obg domain. A disordered region spans residues N62–Q83. Residues I64 to K76 show a composition bias toward basic and acidic residues. In terms of domain architecture, OBG-type G spans A159–K362. Residues G165–S172, F190–T194, D212–G215, T280–D283, and S343–V345 contribute to the GTP site. Mg(2+) contacts are provided by S172 and T192.

The protein belongs to the TRAFAC class OBG-HflX-like GTPase superfamily. OBG GTPase family. In terms of assembly, monomer. Mg(2+) serves as cofactor.

The protein localises to the cytoplasm. Functionally, an essential GTPase which binds GTP, GDP and possibly (p)ppGpp with moderate affinity, with high nucleotide exchange rates and a fairly low GTP hydrolysis rate. Plays a role in control of the cell cycle, stress response, ribosome biogenesis and in those bacteria that undergo differentiation, in morphogenesis control. This chain is GTPase Obg, found in Sulfurovum sp. (strain NBC37-1).